A 350-amino-acid chain; its full sequence is Nuclear pore complex-interacting protein family member A3 (350 aa).

Residues 306-325 (KTPPECLLTPLPPSAPPSVD) form a disordered region.

It belongs to the NPIP family.

The chain is Nuclear pore complex-interacting protein family member A3 (NPIPA3) from Homo sapiens (Human).